We begin with the raw amino-acid sequence, 139 residues long: D-ribose pyranase (139 aa).

His20 acts as the Proton donor in catalysis. Substrate contacts are provided by residues Asp28, His106, and Phe128–Asn130.

It belongs to the RbsD / FucU family. RbsD subfamily. Homodecamer.

The protein resides in the cytoplasm. It catalyses the reaction beta-D-ribopyranose = beta-D-ribofuranose. It functions in the pathway carbohydrate metabolism; D-ribose degradation; D-ribose 5-phosphate from beta-D-ribopyranose: step 1/2. Functionally, catalyzes the interconversion of beta-pyran and beta-furan forms of D-ribose. In Yersinia enterocolitica serotype O:8 / biotype 1B (strain NCTC 13174 / 8081), this protein is D-ribose pyranase.